Consider the following 700-residue polypeptide: Elongation factor G (700 aa).

Residues Glu8 to Thr290 enclose the tr-type G domain. Residues Ala17–Thr24, Asp88–His92, and Asn142–Asp145 each bind GTP.

Belongs to the TRAFAC class translation factor GTPase superfamily. Classic translation factor GTPase family. EF-G/EF-2 subfamily.

It is found in the cytoplasm. Functionally, catalyzes the GTP-dependent ribosomal translocation step during translation elongation. During this step, the ribosome changes from the pre-translocational (PRE) to the post-translocational (POST) state as the newly formed A-site-bound peptidyl-tRNA and P-site-bound deacylated tRNA move to the P and E sites, respectively. Catalyzes the coordinated movement of the two tRNA molecules, the mRNA and conformational changes in the ribosome. The protein is Elongation factor G of Haemophilus influenzae (strain PittEE).